Here is a 119-residue protein sequence, read N- to C-terminus: Ribonuclease P protein component (119 aa).

This sequence belongs to the RnpA family. Consists of a catalytic RNA component (M1 or rnpB) and a protein subunit.

The catalysed reaction is Endonucleolytic cleavage of RNA, removing 5'-extranucleotides from tRNA precursor.. Its function is as follows. RNaseP catalyzes the removal of the 5'-leader sequence from pre-tRNA to produce the mature 5'-terminus. It can also cleave other RNA substrates such as 4.5S RNA. The protein component plays an auxiliary but essential role in vivo by binding to the 5'-leader sequence and broadening the substrate specificity of the ribozyme. This Clostridium acetobutylicum (strain ATCC 824 / DSM 792 / JCM 1419 / IAM 19013 / LMG 5710 / NBRC 13948 / NRRL B-527 / VKM B-1787 / 2291 / W) protein is Ribonuclease P protein component.